The chain runs to 301 residues: MGAQLSTLGHMVLFPVWFLYSLLMKLFQRSTPAITLESPDIKYPLRLIDREIISHDTRRFRFALPSPQHILGLPVGQHIYLSARIDGNLVVRPYTPISSDDDKGFVDLVIKVYFKDTHPKFPAGGKMSQYLESMQIGDTIEFRGPSGLLVYQGKGKFAIRPDKKSNPIIRTVKSVGMIAGGTGITPMLQVIRAIMKDPDDHTVCHLLFANQTEKDILLRPELEELRNKHSARFKLWYTLDRAPEAWDYGQGFVNEEMIRDHLPPPEEEPLVLMCGPPPMIQYACLPNLDHVGHPTERCFVF.

A lipid anchor (N-myristoyl glycine) is attached at Gly-2. Residues 40–152 (DIKYPLRLID…RGPSGLLVYQ (113 aa)) enclose the FAD-binding FR-type domain. Lys-42 is modified (N6-acetyllysine). Tyr-43 carries the post-translational modification Phosphotyrosine. Residues Arg-92, Pro-93, Tyr-94, Val-109, Lys-111, and Phe-114 each coordinate FAD. Lys-120 is subject to N6-acetyllysine. Residues Lys-126, Met-127, Ser-128, and Thr-185 each coordinate FAD.

It belongs to the flavoprotein pyridine nucleotide cytochrome reductase family. In terms of assembly, component of a complex composed of cytochrome b5, NADH-cytochrome b5 reductase (CYB5R3) and MTARC2. Interacts with MTLN; the interaction is required to maintain cellular lipid composition and leads to stimulation of mitochondrial respiratory complex I activity. The cofactor is FAD. In terms of tissue distribution, expressed at late stages of erythroid maturation.

The protein resides in the endoplasmic reticulum membrane. It is found in the mitochondrion outer membrane. Its subcellular location is the cytoplasm. It carries out the reaction 2 Fe(III)-[cytochrome b5] + NADH = 2 Fe(II)-[cytochrome b5] + NAD(+) + H(+). In terms of biological role, catalyzes the reduction of two molecules of cytochrome b5 using NADH as the electron donor. The chain is NADH-cytochrome b5 reductase 3 from Homo sapiens (Human).